The following is a 272-amino-acid chain: Elongation factor Ts (272 aa).

The involved in Mg(2+) ion dislocation from EF-Tu stretch occupies residues 76–79 (TDFV).

This sequence belongs to the EF-Ts family.

It is found in the cytoplasm. Associates with the EF-Tu.GDP complex and induces the exchange of GDP to GTP. It remains bound to the aminoacyl-tRNA.EF-Tu.GTP complex up to the GTP hydrolysis stage on the ribosome. The chain is Elongation factor Ts from Corynebacterium jeikeium (strain K411).